A 387-amino-acid chain; its full sequence is 1-deoxy-D-xylulose 5-phosphate reductoisomerase (387 aa).

Residues T10, G11, S12, I13, and N124 each coordinate NADPH. K125 serves as a coordination point for 1-deoxy-D-xylulose 5-phosphate. E126 contributes to the NADPH binding site. D150 is a Mn(2+) binding site. 1-deoxy-D-xylulose 5-phosphate contacts are provided by S151, E152, S176, and H199. E152 serves as a coordination point for Mn(2+). G205 is a binding site for NADPH. The 1-deoxy-D-xylulose 5-phosphate site is built by S212, N217, K218, and E221. E221 is a Mn(2+) binding site.

This sequence belongs to the DXR family. The cofactor is Mg(2+). Requires Mn(2+) as cofactor.

The enzyme catalyses 2-C-methyl-D-erythritol 4-phosphate + NADP(+) = 1-deoxy-D-xylulose 5-phosphate + NADPH + H(+). It functions in the pathway isoprenoid biosynthesis; isopentenyl diphosphate biosynthesis via DXP pathway; isopentenyl diphosphate from 1-deoxy-D-xylulose 5-phosphate: step 1/6. Its function is as follows. Catalyzes the NADPH-dependent rearrangement and reduction of 1-deoxy-D-xylulose-5-phosphate (DXP) to 2-C-methyl-D-erythritol 4-phosphate (MEP). This chain is 1-deoxy-D-xylulose 5-phosphate reductoisomerase, found in Clostridium beijerinckii (strain ATCC 51743 / NCIMB 8052) (Clostridium acetobutylicum).